The following is an 82-amino-acid chain: Small ribosomal subunit protein bS16 (82 aa).

It belongs to the bacterial ribosomal protein bS16 family.

This is Small ribosomal subunit protein bS16 from Shewanella sp. (strain ANA-3).